A 388-amino-acid polypeptide reads, in one-letter code: Probable nitrate transporter NarT (388 aa).

Helical transmembrane passes span 14–34 (TLSL…MPMI), 45–65 (ISIV…PFGY), 69–89 (IIGA…PIFL), 98–118 (MLML…VGVT), 139–159 (GNLG…AIGW), 161–181 (STVR…FFLG), 206–226 (YYLS…GIFL), 242–262 (GIRA…GGII), 276–296 (FLFM…ILFT), 297–317 (VGCL…FKLV), 330–350 (GIVS…ITYV), and 359–379 (LAFI…WHLS).

The protein belongs to the major facilitator superfamily. Nitrate/nitrite porter (TC 2.A.1.8) family.

The protein resides in the cell membrane. Functionally, probably required for nitrate uptake under anoxic conditions. Also possibly involved in excretion of nitrite produced by the dissimilatory reduction of nitrate. The chain is Probable nitrate transporter NarT (narT) from Staphylococcus carnosus (strain TM300).